The primary structure comprises 53 residues: Minor histocompatibility protein HMSD variant form (53 aa).

ACC-6 forms a complex with MHC HLA-B*4403. Highly expressed in dendritic cells and primary leukemia cells, especially those of myeloid lineage. ACC-6 expression is limited to cells of the hematopoietic lineage.

In terms of biological role, this splice variant of HMSD is the precursor of the histocompatibility antigen ACC-6. More generally, minor histocompatibility antigens (mHags) refer to immunogenic peptide which, when complexed with MHC, can generate an immune response after recognition by specific T-cells. The peptides are derived from polymorphic intracellular proteins, which are cleaved by normal pathways of antigen processing. The binding of these peptides to MHC class I or class II molecules and its expression on the cell surface can stimulate T-cell responses and thereby trigger graft rejection or graft-versus-host disease (GVHD) after hematopoietic stem cell transplantation from HLA-identical sibling donor. GVHD is a frequent complication after bone marrow transplantation (BMT), due to mismatch of minor histocompatibility antigen in HLA-matched sibling marrow transplants. However, associated with GVHD, a favorable graft-versus-leukemia (GVL) can be induced by donor-recipient disparities in mHags. ACC-6 is presented to the cell surface by MHC HLA-B*4403. This complex specifically elicits donor-cytotoxic T-lymphocyte (CTL) reactivity against hematologic malignancies after treatment by HLA-identical allogenic BMT. It induces cell recognition and lysis by CTL. Immunogenicity of most autosomal mHags results from single-nucleotide polymorphisms that cause amino-acid substitutions within epitopes, leading to the differential recognition of peptides between donor and recipient. In Homo sapiens (Human), this protein is Minor histocompatibility protein HMSD variant form (HMSD).